A 743-amino-acid polypeptide reads, in one-letter code: Dolichyl-phosphate-mannose--protein mannosyltransferase 5 (743 aa).

The Lumenal segment spans residues 1-46 (MNKEHLLKVDPIPDVTIKRGPLRSFLITKPCDNLSSLRTVTSSKEK). Asn-33 carries N-linked (GlcNAc...) asparagine glycosylation. The chain crosses the membrane as a helical span at residues 47–67 (LLVGCLLIFTAIVRLHNISLP). The Cytoplasmic segment spans residues 68-129 (NSVVFGENEV…IGTEYTANVP (62 aa)). A helical transmembrane segment spans residues 130–150 (YVAMRFFSATLGIVSVLVLYL). Residues 151–158 (TLRVSGVK) lie on the Lumenal side of the membrane. A helical transmembrane segment spans residues 159 to 179 (IAVAAICAVCFAIENSFVTLS). Arg-180 is a topological domain (cytoplasmic). The helical transmembrane segment at 181 to 201 (FTLIEGPFVFFMACAVYFFRR) threads the bilayer. The Lumenal segment spans residues 202 to 231 (SELYLPNSCKANKSLLAASIALGFAVSSKW). Residue Asn-213 is glycosylated (N-linked (GlcNAc...) asparagine). A helical transmembrane segment spans residues 232 to 252 (AGLFTIAWAGIIVLWRVWFMI). The Cytoplasmic segment spans residues 253-264 (GDLSRPIGSSIK). The chain crosses the membrane as a helical span at residues 265-285 (YMAFQFTCLLAIPAFIYFLIF). The Lumenal segment spans residues 286–583 (SVHIKTLNVN…GREVYFLGNA (298 aa)). An MIR 1 domain is found at 320–374 (VAEVAVGSAVSLNHVGTAGGYLHSHLHNYPAGSMQQQVTLYPHIDQNNKWIIELA). 2 N-linked (GlcNAc...) asparagine glycosylation sites follow: Asn-380 and Asn-386. MIR domains lie at 384–444 (FQNL…IEID) and 454–510 (QEHI…IEEN). A helical membrane pass occupies residues 584–604 (VLWWSVTAFICTFIIGVAVEL). Over 605 to 623 (LAWKLGVNILRDKHIINFH) the chain is Cytoplasmic. Residues 624-644 (YQVFQYLLGFAAHYFPYFFVG) form a helical membrane-spanning segment. The Lumenal portion of the chain corresponds to 645 to 646 (QK). Residues 647–667 (LFLYDYLPAYYFGILAFGHAL) form a helical membrane-spanning segment. The Cytoplasmic portion of the chain corresponds to 668–683 (DLISTYISNKRNNTGY). The helical transmembrane segment at 684–704 (IVVAIFMVVCFYFFSEHSPLI) threads the bilayer. The Lumenal portion of the chain corresponds to 705-743 (YATGWSSNLCKRSKWLGSWDFYCNSLLLSDSHYELNAES).

The protein belongs to the glycosyltransferase 39 family. PMT3 and PMT5 form a functional heterodimer. Also forms a minor complex with PMT2.

The protein resides in the endoplasmic reticulum membrane. It catalyses the reaction a di-trans,poly-cis-dolichyl beta-D-mannosyl phosphate + L-seryl-[protein] = 3-O-(alpha-D-mannosyl)-L-seryl-[protein] + a di-trans,poly-cis-dolichyl phosphate + H(+). The catalysed reaction is a di-trans,poly-cis-dolichyl beta-D-mannosyl phosphate + L-threonyl-[protein] = 3-O-(alpha-D-mannosyl)-L-threonyl-[protein] + a di-trans,poly-cis-dolichyl phosphate + H(+). It functions in the pathway protein modification; protein glycosylation. Its function is as follows. Protein O-mannosyltransferase involved in O-glycosylation which is essential for cell wall rigidity. Forms a heterodimeric complex with PMT3 and more rarely with PMT2 to transfer mannose from Dol-P-mannose to Ser or Thr residues on proteins. The sequence is that of Dolichyl-phosphate-mannose--protein mannosyltransferase 5 from Saccharomyces cerevisiae (strain ATCC 204508 / S288c) (Baker's yeast).